The sequence spans 358 residues: Methylthioribose-1-phosphate isomerase (358 aa).

Substrate is bound by residues 54–56 (CGA) and glutamine 205. The active-site Proton donor is aspartate 246. 256-257 (NQ) contacts substrate.

Belongs to the eIF-2B alpha/beta/delta subunits family. MtnA subfamily.

The catalysed reaction is 5-(methylsulfanyl)-alpha-D-ribose 1-phosphate = 5-(methylsulfanyl)-D-ribulose 1-phosphate. The protein operates within amino-acid biosynthesis; L-methionine biosynthesis via salvage pathway; L-methionine from S-methyl-5-thio-alpha-D-ribose 1-phosphate: step 1/6. In terms of biological role, catalyzes the interconversion of methylthioribose-1-phosphate (MTR-1-P) into methylthioribulose-1-phosphate (MTRu-1-P). The protein is Methylthioribose-1-phosphate isomerase of Pseudomonas fluorescens (strain ATCC BAA-477 / NRRL B-23932 / Pf-5).